Consider the following 187-residue polypeptide: Putative lipoprotein LppJ (187 aa).

Positions 1–28 (MPHSTADRRLRLTRQALLAAAVAPLLAG) are cleaved as a signal peptide. Cysteine 29 carries N-palmitoyl cysteine lipidation. Cysteine 29 carries S-diacylglycerol cysteine lipidation.

It localises to the cell membrane. The polypeptide is Putative lipoprotein LppJ (lppJ) (Mycobacterium bovis (strain ATCC BAA-935 / AF2122/97)).